Reading from the N-terminus, the 343-residue chain is ABC transporter riboflavin-binding protein RfuA (343 aa).

An N-terminal signal peptide occupies residues 1–19 (MNGAVCVLSALIAVFTCFS). Cys-20 carries N-palmitoyl cysteine lipidation. Cys-20 carries S-diacylglycerol cysteine lipidation. Residues 43-46 (SPVY), Asp-124, Gln-140, Tyr-176, Trp-208, and Asp-255 contribute to the riboflavin site.

This sequence belongs to the BMP lipoprotein family. Monomer in solution. The complex is probably composed of two ATP-binding proteins (RfuB), two transmembrane proteins (RfuC and RfuD) and a solute-binding protein (RfuA).

The protein localises to the cell inner membrane. Functionally, probably part of the ABC transporter complex RfuABCD involved in riboflavin import. Binds riboflavin. The protein is ABC transporter riboflavin-binding protein RfuA of Treponema pallidum (strain Nichols).